The following is a 152-amino-acid chain: Histone H2B.9 (152 aa).

2 stretches are compositionally biased toward basic and acidic residues: residues 1 to 16 (MAPK…KPAE) and 34 to 52 (EKRL…EGKK). The segment at 1 to 59 (MAPKAEKKPAAKKPAEEEPAAEKAPAAGKKPKAEKRLPAGKGEKGGAGEGKKAGRKKGK) is disordered. N6-acetyllysine is present on residues Lys-7 and Lys-35. Residue Lys-148 forms a Glycyl lysine isopeptide (Lys-Gly) (interchain with G-Cter in ubiquitin) linkage.

It belongs to the histone H2B family. In terms of assembly, the nucleosome is a histone octamer containing two molecules each of H2A, H2B, H3 and H4 assembled in one H3-H4 heterotetramer and two H2A-H2B heterodimers. The octamer wraps approximately 147 bp of DNA. Can be acetylated to form H2BK6ac and H2BK33ac. In terms of processing, monoubiquitinated by BRE1 to form H2BK143ub1 and deubiquitinated by UBP26. Required for heterochromatic histone H3 di- and trimethylation at H3K4me. May give a specific tag for epigenetic transcriptional activation.

Its subcellular location is the nucleus. It localises to the chromosome. Its function is as follows. Core component of nucleosome. Nucleosomes wrap and compact DNA into chromatin, limiting DNA accessibility to the cellular machineries which require DNA as a template. Histones thereby play a central role in transcription regulation, DNA repair, DNA replication and chromosomal stability. DNA accessibility is regulated via a complex set of post-translational modifications of histones, also called histone code, and nucleosome remodeling. This is Histone H2B.9 (H2B.9) from Oryza sativa subsp. indica (Rice).